A 64-amino-acid chain; its full sequence is Large ribosomal subunit protein bL33 (64 aa).

Belongs to the bacterial ribosomal protein bL33 family.

This chain is Large ribosomal subunit protein bL33, found in Synechococcus elongatus (strain ATCC 33912 / PCC 7942 / FACHB-805) (Anacystis nidulans R2).